Here is a 430-residue protein sequence, read N- to C-terminus: Drebrin-like protein (430 aa).

The ADF-H domain maps to asparagine 4–alanine 133. Threonine 26 is modified (phosphothreonine). Residues glycine 137 and serine 160 each carry the phosphoserine modification. Lysine 176 carries the post-translational modification N6-acetyllysine. Positions lysine 176–alanine 231 form a coiled coil. Phosphoserine occurs at positions 183 and 232. The disordered stretch occupies residues arginine 219–serine 283. Over residues proline 233 to valine 244 the composition is skewed to polar residues. Residues serine 245–alanine 267 are compositionally biased toward basic and acidic residues. The span at methionine 268–glutamine 277 shows a compositional bias: polar residues. 4 positions are modified to phosphoserine: serine 269, serine 272, serine 275, and serine 283. Lysine 288 carries the post-translational modification N6-acetyllysine. Phosphothreonine is present on threonine 291. Residues tyrosine 334 and tyrosine 344 each carry the phosphotyrosine modification. An SH3 domain is found at glycine 371–glutamate 430.

It belongs to the ABP1 family. Interacts with SHANK2, SHANK3 and SYN1. Interacts with FGD1 and DNM1. Interacts with ANKRD54. Interacts with COBL. Interacts with WASL and WIPF1. Interacts with MAP4K1 and PRAM1. In terms of processing, degraded by caspases during apoptosis.

The protein localises to the cytoplasm. It is found in the cytoskeleton. The protein resides in the cell projection. Its subcellular location is the lamellipodium. It localises to the ruffle. The protein localises to the cell cortex. It is found in the cytosol. The protein resides in the synapse. Its subcellular location is the perikaryon. It localises to the neuron projection. The protein localises to the cell membrane. It is found in the cytoplasmic vesicle. The protein resides in the clathrin-coated vesicle membrane. Its subcellular location is the golgi apparatus membrane. It localises to the podosome. The protein localises to the early endosome. It is found in the dendrite. The protein resides in the postsynaptic density. Its function is as follows. Adapter protein that binds F-actin and DNM1, and thereby plays a role in receptor-mediated endocytosis. Plays a role in the reorganization of the actin cytoskeleton, formation of cell projections, such as neurites, in neuron morphogenesis and synapse formation via its interaction with WASL and COBL. Does not bind G-actin and promote actin polymerization by itself. Required for the formation of organized podosome rosettes. May act as a common effector of antigen receptor-signaling pathways in leukocytes. Acts as a key component of the immunological synapse that regulates T-cell activation by bridging TCRs and the actin cytoskeleton to gene activation and endocytic processes. The polypeptide is Drebrin-like protein (DBNL) (Homo sapiens (Human)).